Here is a 389-residue protein sequence, read N- to C-terminus: S-adenosylmethionine synthase (389 aa).

His17 contributes to the ATP binding site. Asp19 lines the Mg(2+) pocket. Position 45 (Glu45) interacts with K(+). Residues Glu58 and Gln101 each coordinate L-methionine. The flexible loop stretch occupies residues 101 to 111; that stretch reads QSPDIAQGVNP. ATP-binding positions include 168-170, 234-235, Asp243, 249-250, and Lys270; these read DGK, RF, and RK. Asp243 is an L-methionine binding site. Lys274 contributes to the L-methionine binding site.

It belongs to the AdoMet synthase family. In terms of assembly, homotetramer; dimer of dimers. The cofactor is Mg(2+). It depends on K(+) as a cofactor.

It is found in the cytoplasm. It carries out the reaction L-methionine + ATP + H2O = S-adenosyl-L-methionine + phosphate + diphosphate. It participates in amino-acid biosynthesis; S-adenosyl-L-methionine biosynthesis; S-adenosyl-L-methionine from L-methionine: step 1/1. Catalyzes the formation of S-adenosylmethionine (AdoMet) from methionine and ATP. The overall synthetic reaction is composed of two sequential steps, AdoMet formation and the subsequent tripolyphosphate hydrolysis which occurs prior to release of AdoMet from the enzyme. This Syntrophobacter fumaroxidans (strain DSM 10017 / MPOB) protein is S-adenosylmethionine synthase.